The chain runs to 939 residues: Valine--tRNA ligase (939 aa).

The 'HIGH' region signature appears at 47–57 (PNVTGILHMGH). The 'KMSKS' region motif lies at 563 to 567 (KLSKS). ATP is bound at residue Lys566. Residues 873-939 (AEHLAKEHAR…QSILDKIASL (67 aa)) are a coiled coil.

This sequence belongs to the class-I aminoacyl-tRNA synthetase family. ValS type 1 subfamily. In terms of assembly, monomer.

It is found in the cytoplasm. The catalysed reaction is tRNA(Val) + L-valine + ATP = L-valyl-tRNA(Val) + AMP + diphosphate. Functionally, catalyzes the attachment of valine to tRNA(Val). As ValRS can inadvertently accommodate and process structurally similar amino acids such as threonine, to avoid such errors, it has a 'posttransfer' editing activity that hydrolyzes mischarged Thr-tRNA(Val) in a tRNA-dependent manner. This Chlamydia muridarum (strain MoPn / Nigg) protein is Valine--tRNA ligase.